A 1179-amino-acid chain; its full sequence is Tubulin glycylase 3B (1179 aa).

Polar residues predominate over residues 177-199 (NKGQTNNSNRENGGNFHSEQSPK). Disordered stretches follow at residues 177-208 (NKGQTNNSNRENGGNFHSEQSPKSAAGSVVSG), 250-278 (QQPQPLSQQHSNQSSQSSNPQSQSPLPLS), 592-625 (KVLSNTKSKDEEESSDDDETPVKSKSNNQNAVQQ), and 853-890 (QKQHMNKRKNSHRISVNHNHNDPIEEESAQSSTSLKQD). Residues 592 to 601 (KVLSNTKSKD) are compositionally biased toward basic and acidic residues. 2 stretches are compositionally biased toward polar residues: residues 614–625 (KSKSNNQNAVQQ) and 881–890 (AQSSTSLKQD). Positions 790–1152 (FIDFYETVDF…SMAKKGTKKN (363 aa)) constitute a TTL domain. ATP contacts are provided by residues 965–968 (QKYI), Lys978, and Asp980.

The protein localises to the cell projection. It localises to the cilium. It is found in the cytoplasm. The protein resides in the cytoskeleton. Its subcellular location is the cilium axoneme. Its function is as follows. Polyglycylase which modifies tubulin, generating side chains of glycine on the gamma-carboxyl groups of specific glutamate residues within the C-terminal tail of tubulin. Polyglycylates tubulin, with a preference for alpha-tubulin toward beta-tubulin. In Tetrahymena thermophila (strain SB210), this protein is Tubulin glycylase 3B (TTLL3B).